We begin with the raw amino-acid sequence, 156 residues long: Small ribosomal subunit protein uS7 (156 aa).

It belongs to the universal ribosomal protein uS7 family. Part of the 30S ribosomal subunit. Contacts proteins S9 and S11.

Its function is as follows. One of the primary rRNA binding proteins, it binds directly to 16S rRNA where it nucleates assembly of the head domain of the 30S subunit. Is located at the subunit interface close to the decoding center, probably blocks exit of the E-site tRNA. This Crocosphaera subtropica (strain ATCC 51142 / BH68) (Cyanothece sp. (strain ATCC 51142)) protein is Small ribosomal subunit protein uS7.